The following is a 569-amino-acid chain: Oxygen-dependent choline dehydrogenase (569 aa).

Residue 9–38 coordinates FAD; the sequence is DYVIIGGGSAGSVLGNRLSEDKDKEVLVLE. Histidine 475 acts as the Proton acceptor in catalysis.

Belongs to the GMC oxidoreductase family. It depends on FAD as a cofactor.

The enzyme catalyses choline + A = betaine aldehyde + AH2. It carries out the reaction betaine aldehyde + NAD(+) + H2O = glycine betaine + NADH + 2 H(+). The protein operates within amine and polyamine biosynthesis; betaine biosynthesis via choline pathway; betaine aldehyde from choline (cytochrome c reductase route): step 1/1. Functionally, involved in the biosynthesis of the osmoprotectant glycine betaine. Catalyzes the oxidation of choline to betaine aldehyde and betaine aldehyde to glycine betaine at the same rate. The polypeptide is Oxygen-dependent choline dehydrogenase (Staphylococcus aureus (strain COL)).